The primary structure comprises 700 residues: Elongation factor G 2 (700 aa).

One can recognise a tr-type G domain in the interval 8–290; sequence ERYRNIGISA…AVVDYLPSPI (283 aa). GTP is bound by residues 17 to 24, 88 to 92, and 142 to 145; these read AHIDAGKT, DTPGH, and NKMD.

This sequence belongs to the TRAFAC class translation factor GTPase superfamily. Classic translation factor GTPase family. EF-G/EF-2 subfamily.

The protein localises to the cytoplasm. Functionally, catalyzes the GTP-dependent ribosomal translocation step during translation elongation. During this step, the ribosome changes from the pre-translocational (PRE) to the post-translocational (POST) state as the newly formed A-site-bound peptidyl-tRNA and P-site-bound deacylated tRNA move to the P and E sites, respectively. Catalyzes the coordinated movement of the two tRNA molecules, the mRNA and conformational changes in the ribosome. The protein is Elongation factor G 2 (fusB) of Ralstonia nicotianae (strain ATCC BAA-1114 / GMI1000) (Ralstonia solanacearum).